Consider the following 1015-residue polypeptide: Beta-galactosidase (1015 aa).

Residue Glu434 is the Proton donor of the active site. Glu513 (nucleophile) is an active-site residue.

The protein belongs to the glycosyl hydrolase 2 family. The cofactor is Mg(2+). Mn(2+) is required as a cofactor.

It carries out the reaction Hydrolysis of terminal non-reducing beta-D-galactose residues in beta-D-galactosides.. This Arthrobacter sp. (strain B7) protein is Beta-galactosidase (lacZ).